The primary structure comprises 225 residues: NAD(P)H-quinone oxidoreductase subunit K, chloroplastic (225 aa).

The [4Fe-4S] cluster site is built by Cys-43, Cys-44, Cys-108, and Cys-139.

Belongs to the complex I 20 kDa subunit family. As to quaternary structure, NDH is composed of at least 16 different subunits, 5 of which are encoded in the nucleus. [4Fe-4S] cluster serves as cofactor.

It is found in the plastid. The protein resides in the chloroplast thylakoid membrane. It carries out the reaction a plastoquinone + NADH + (n+1) H(+)(in) = a plastoquinol + NAD(+) + n H(+)(out). It catalyses the reaction a plastoquinone + NADPH + (n+1) H(+)(in) = a plastoquinol + NADP(+) + n H(+)(out). NDH shuttles electrons from NAD(P)H:plastoquinone, via FMN and iron-sulfur (Fe-S) centers, to quinones in the photosynthetic chain and possibly in a chloroplast respiratory chain. The immediate electron acceptor for the enzyme in this species is believed to be plastoquinone. Couples the redox reaction to proton translocation, and thus conserves the redox energy in a proton gradient. This is NAD(P)H-quinone oxidoreductase subunit K, chloroplastic from Lobularia maritima (Sweet alyssum).